Consider the following 497-residue polypeptide: uncharacterized protein (497 aa).

Over residues 1-16 the composition is skewed to polar residues; it reads MSTTTETVTWSQYKPQ. The disordered stretch occupies residues 1 to 29; sequence MSTTTETVTWSQYKPQETQRRLSRSSTIT. Position 64 is a phosphoserine (Ser-64). 6 consecutive transmembrane segments (helical) span residues 86–106, 120–140, 155–175, 180–200, 222–242, and 258–278; these read IALVLLNNLMSEMSLTIALPI, FSGLVIGIPTMISLVCLYPML, FRPLIVSCISQIIGHLLYSLA, WLYLILIGRMCSGVGFTMFLY, LNILAQILGSMAGAFLGGILA, and AGSWFMLFIWIVYSIFLSIFF. Ser-295 carries the phosphoserine modification. Transmembrane regions (helical) follow at residues 309-329, 348-368, 377-397, 407-427, 443-463, and 468-488; these read FMLCFLSMAAFISIFNVAGYQ, GNFLSLSSLVIAPFVFFSTFL, IMLYGFMMGIVALIVHLVLDA, FVLYSIMQFGFSVGSAPLVSL, VVQVGISIGETVGSICGGAIF, and VGFIAMNLGIALLVFIQLLYL.

The protein resides in the membrane. This is an uncharacterized protein from Schizosaccharomyces pombe (strain 972 / ATCC 24843) (Fission yeast).